A 102-amino-acid chain; its full sequence is uncharacterized protein (102 aa).

The disordered stretch occupies residues Met-1–Thr-71. Residues Met-1 to Asp-79 are Extracellular-facing. Residues Ser-56–Thr-71 are compositionally biased toward polar residues. Asn-65 is a glycosylation site (N-linked (GlcNAc...) asparagine; by host). A helical transmembrane segment spans residues Ile-80–Met-97. Topologically, residues Arg-98 to Gln-102 are cytoplasmic.

It belongs to the HHV-5 UL15A protein family.

The protein resides in the host membrane. This is an uncharacterized protein from Human cytomegalovirus (strain AD169) (HHV-5).